The sequence spans 330 residues: D-cysteine desulfhydrase (330 aa).

Lys52 carries the N6-(pyridoxal phosphate)lysine modification.

This sequence belongs to the ACC deaminase/D-cysteine desulfhydrase family. In terms of assembly, homodimer. Requires pyridoxal 5'-phosphate as cofactor.

The enzyme catalyses D-cysteine + H2O = hydrogen sulfide + pyruvate + NH4(+) + H(+). Catalyzes the alpha,beta-elimination reaction of D-cysteine and of several D-cysteine derivatives. It could be a defense mechanism against D-cysteine. This chain is D-cysteine desulfhydrase, found in Yersinia pseudotuberculosis serotype O:1b (strain IP 31758).